The sequence spans 632 residues: Serine/threonine-protein kinase plk-2 (632 aa).

The disordered stretch occupies residues 1–26 (MQRVQPSAARVKSQKKEKAPPDVPDV). One can recognise a Protein kinase domain in the interval 36–287 (YEKGKFLGKG…ARAVCRDHFF (252 aa)). ATP contacts are provided by residues 42 to 50 (LGKGGFAHC) and lysine 65. The active-site Proton acceptor is aspartate 159. The tract at residues 313–334 (AEENVSPSGTIDQRGPHQAGRS) is disordered. 2 consecutive POLO box domains span residues 405–484 (WISK…YMND) and 506–588 (TLRV…RLVE).

The protein belongs to the protein kinase superfamily. Ser/Thr protein kinase family. CDC5/Polo subfamily. Interacts (via POLO box domain) with mex-5 and mex-6. Interacts (via POLO box domain) with him-8 (via N-terminus); the interaction mediates plk-2 recruitment to the pairing region of X chromosomes during meiosis. Interacts with sun-1. May interact with nicotinic acetylcholine receptor. It depends on Mg(2+) as a cofactor. In terms of tissue distribution, expressed in oocytes.

The protein resides in the nucleus. It localises to the cytoplasm. It is found in the cytoskeleton. Its subcellular location is the microtubule organizing center. The protein localises to the centrosome. The protein resides in the chromosome. It localises to the centromere. It is found in the kinetochore. The enzyme catalyses L-seryl-[protein] + ATP = O-phospho-L-seryl-[protein] + ADP + H(+). It catalyses the reaction L-threonyl-[protein] + ATP = O-phospho-L-threonyl-[protein] + ADP + H(+). Its function is as follows. Serine/threonine-protein kinase which plays a role, during oogenesis, in chromosome pairing and synapsis, by facilitating the recruitment and attachment of meiotic chromosomes to the nuclear envelope during prophase. Promotes the localization of brc-1 to the short arm of homologous chromosomes during meiotic prophase I. Regulates the formation of sun-1 patches along the nuclear envelope. Promotes meiotic nuclei apoptosis in response to chromosomal asynapsis. Plays a redundant role with plk-1 in the establishment of cell polarity downstream of mex-5 and mex-6 during the first embryonic cell divisions. Plays a role in nicotinic acetylcholine receptor-mediated sensitivity to nicotine but not levamisole. Regulates motility. This is Serine/threonine-protein kinase plk-2 from Caenorhabditis elegans.